We begin with the raw amino-acid sequence, 325 residues long: Fructose-1,6-bisphosphatase class 1 (325 aa).

4 residues coordinate Mg(2+): Glu84, Asp103, Leu105, and Asp106. Substrate-binding positions include 106 to 109 (DGSS), Asn196, and Lys262. Residue Glu268 participates in Mg(2+) binding.

The protein belongs to the FBPase class 1 family. As to quaternary structure, homotetramer. Mg(2+) is required as a cofactor.

Its subcellular location is the cytoplasm. It catalyses the reaction beta-D-fructose 1,6-bisphosphate + H2O = beta-D-fructose 6-phosphate + phosphate. Its pathway is carbohydrate biosynthesis; gluconeogenesis. The chain is Fructose-1,6-bisphosphatase class 1 from Shewanella oneidensis (strain ATCC 700550 / JCM 31522 / CIP 106686 / LMG 19005 / NCIMB 14063 / MR-1).